The following is a 351-amino-acid chain: Ribosomal RNA large subunit methyltransferase M (351 aa).

S-adenosyl-L-methionine contacts are provided by residues Ser186, 219–222 (APGG), Asp238, Asp258, and Asp274. Lys303 acts as the Proton acceptor in catalysis.

Belongs to the class I-like SAM-binding methyltransferase superfamily. RNA methyltransferase RlmE family. RlmM subfamily. As to quaternary structure, monomer.

It is found in the cytoplasm. It carries out the reaction cytidine(2498) in 23S rRNA + S-adenosyl-L-methionine = 2'-O-methylcytidine(2498) in 23S rRNA + S-adenosyl-L-homocysteine + H(+). Its function is as follows. Catalyzes the 2'-O-methylation at nucleotide C2498 in 23S rRNA. The polypeptide is Ribosomal RNA large subunit methyltransferase M (Xylella fastidiosa (strain 9a5c)).